Consider the following 374-residue polypeptide: Alcohol dehydrogenase S chain (374 aa).

N-acetylserine is present on S2. Zn(2+) contacts are provided by C47, H68, C98, C101, C104, C112, and C174. Residues 199–204 (GLGGVG), D223, K228, 292–294 (VGV), and R369 each bind NAD(+).

It belongs to the zinc-containing alcohol dehydrogenase family. Class-I subfamily. As to quaternary structure, dimer of identical or non-identical chains of two types (E and S) coded by 2 separate genes at different loci. It depends on Zn(2+) as a cofactor.

The protein localises to the cytoplasm. The catalysed reaction is a primary alcohol + NAD(+) = an aldehyde + NADH + H(+). The enzyme catalyses a secondary alcohol + NAD(+) = a ketone + NADH + H(+). This chain is Alcohol dehydrogenase S chain, found in Equus caballus (Horse).